We begin with the raw amino-acid sequence, 493 residues long: Mitochondrial distribution and morphology protein 10 (493 aa).

It belongs to the MDM10 family. Component of the ER-mitochondria encounter structure (ERMES) or MDM complex, composed of MMM1, MDM10, MDM12 and MDM34. Associates with the mitochondrial outer membrane sorting assembly machinery SAM(core) complex, which consists of SAM35, SAM37 and SAM50, to form a SAM(holo) complex.

It is found in the mitochondrion outer membrane. Component of the ERMES/MDM complex, which serves as a molecular tether to connect the endoplasmic reticulum and mitochondria. Components of this complex are involved in the control of mitochondrial shape and protein biogenesis and may function in phospholipid exchange. MDM10 is involved in the late assembly steps of the general translocase of the mitochondrial outer membrane (TOM complex). Functions in the TOM40-specific route of the assembly of outer membrane beta-barrel proteins, including the association of TOM40 with the receptor TOM22 and small TOM proteins. Can associate with the SAM(core) complex as well as the MDM12-MMM1 complex, both involved in late steps of the major beta-barrel assembly pathway, that is responsible for biogenesis of all outer membrane beta-barrel proteins. May act as a switch that shuttles between both complexes and channels precursor proteins into the TOM40-specific pathway. Plays a role in mitochondrial morphology and in the inheritance of mitochondria. This chain is Mitochondrial distribution and morphology protein 10, found in Saccharomyces cerevisiae (strain RM11-1a) (Baker's yeast).